Consider the following 397-residue polypeptide: Class V chitinase CHIT5 (397 aa).

The signal sequence occupies residues 1–18; it reads MIIKLLVALIHYLHETMA. The GH18 domain maps to 54–397; that stretch reads GVRAAYWPAW…SKQASNAWGY (344 aa). 2 N-linked (GlcNAc...) asparagine glycosylation sites follow: Asn128 and Asn147. Catalysis depends on Glu166, which acts as the Proton donor. N-linked (GlcNAc...) asparagine glycans are attached at residues Asn193, Asn209, Asn247, and Asn261.

Belongs to the glycosyl hydrolase 18 family. Chitinase class V subfamily.

It carries out the reaction Random endo-hydrolysis of N-acetyl-beta-D-glucosaminide (1-&gt;4)-beta-linkages in chitin and chitodextrins.. It functions in the pathway glycan degradation; chitin degradation. Possesses chitinase activity in vitro toward glycol chitin, carboxymethyl-chitin, colloidal chitin, and the chitin oligosaccharides (N-acetylglucosamine) (GlcNAc)6 and (GlcNAc)5. Hydrolyzes (GlcNAc)6 into (GlcNAc)4 and (GlcNAc)2, or two (GlcNAc)3 molecules. Has the capacity to inhibit hyphal growth of the fungus Trichoderma viride in an agar-plate bioassay. Involved in symbiotic signaling. Required for root hair infection threads (ITs) elongation and nodule development. Possesses Nod factor (NF) hydrolase activity. NFs are lipo-chitooligosaccharide signaling molecules produced by nitrogen-fixing rhizobia to initiate nodulation (symbiosis) on the roots of legumes. Modulates NF levels and signaling to complete transition of infected nodules to functional nitrogen-fixing organs. This Lotus japonicus (Lotus corniculatus var. japonicus) protein is Class V chitinase CHIT5.